A 620-amino-acid polypeptide reads, in one-letter code: Glutathione-regulated potassium-efflux system protein KefC (620 aa).

The next 12 membrane-spanning stretches (helical) occupy residues 4–24 (HTLM…PIAV), 26–46 (LGLG…PWGL), 54–74 (SILH…GLEL), 90–110 (GALQ…FLGL), 114–134 (VAEL…MQAM), 149–169 (FAVL…IPLL), 178–198 (LGAF…VVLL), 218–238 (VFSA…EEVG), 270–290 (GLLL…GTLV), 294–314 (LRIL…LWLI), 327–347 (WFAV…GAAQ), and 359–379 (ALTL…VLLT). An RCK N-terminal domain is found at 399–518 (QPRVIVAGFG…AGVAMPERET (120 aa)). The interval 599–620 (QGTAEGKHTGDIADEPQVKPST) is disordered.

This sequence belongs to the monovalent cation:proton antiporter 2 (CPA2) transporter (TC 2.A.37) family. KefC subfamily. Homodimer. Interacts with the regulatory subunit KefF.

Its subcellular location is the cell inner membrane. Functionally, pore-forming subunit of a potassium efflux system that confers protection against electrophiles. Catalyzes K(+)/H(+) antiport. This is Glutathione-regulated potassium-efflux system protein KefC from Salmonella arizonae (strain ATCC BAA-731 / CDC346-86 / RSK2980).